The primary structure comprises 136 residues: uncharacterized protein (136 aa).

Helical transmembrane passes span 10-32 (SAGI…FIWI), 44-66 (LRCG…ILHF), 70-89 (VLLL…KTLL), and 102-124 (IAGV…WLLF).

It localises to the cell membrane. This is an uncharacterized protein from Archaeoglobus fulgidus (strain ATCC 49558 / DSM 4304 / JCM 9628 / NBRC 100126 / VC-16).